We begin with the raw amino-acid sequence, 390 residues long: GTPase Obg (390 aa).

Residues 1-159 form the Obg domain; it reads MKFVDEASIL…RDLMLELMLL (159 aa). A disordered region spans residues 127-147; that stretch reads NTRFKSSVNRTPRQKTMGTPG. Over residues 129–143 the composition is skewed to polar residues; sequence RFKSSVNRTPRQKTM. The OBG-type G domain occupies 160-333; sequence ADVGMLGMPN…LCWDVMTFII (174 aa). GTP is bound by residues 166-173, 191-195, 213-216, 283-286, and 314-316; these read GMPNAGKS, FTTLV, DIPG, NKID, and SAA. S173 and T193 together coordinate Mg(2+).

The protein belongs to the TRAFAC class OBG-HflX-like GTPase superfamily. OBG GTPase family. In terms of assembly, monomer. Requires Mg(2+) as cofactor.

The protein resides in the cytoplasm. In terms of biological role, an essential GTPase which binds GTP, GDP and possibly (p)ppGpp with moderate affinity, with high nucleotide exchange rates and a fairly low GTP hydrolysis rate. Plays a role in control of the cell cycle, stress response, ribosome biogenesis and in those bacteria that undergo differentiation, in morphogenesis control. The sequence is that of GTPase Obg from Citrobacter koseri (strain ATCC BAA-895 / CDC 4225-83 / SGSC4696).